The primary structure comprises 510 residues: MGGNLSSELKSTKYRKREIVDLRKMNIDKLPPTIGALQCKELLLSENDLITIPEEIGKLSKVEIIDFAKNRINYIPPEIGSLATLKQLFLSNNKLFYTPITPNIGALKNLTRLDLSSNQLDDLPVEISNCEALEYLDISDNQLQSFPLEFGKLYNLQVFNCSKNSLKSLPSEISGWVKLEELNVSNNQLAFLPNQICLLGLLSTLNVGFNKLQQLPEELSSMVSLTNLDLKVNPPLQYVPQLSNLRQLKILSIRNLQITHLPLGLGLLSELIELDIRDNPQLKEIPYDIATLINLQKLDLFGNNMRIVPREVGNLINLQTLDLRQNKLTIDNIPSEIGKLVNLKKLLLSNNLLIALPPEIASMKALKEFEASNNQLQAIPTEIGELSGLTKINLSGNKLTSIPASFGNLSELQICDLKSNEIAELPTTLDGLKSCTKIDLSHNMLTELPWEFGDLIGLTILDVGHNPLTIPPNPIVMKGTESIIQWLKKNEKEGRKGKVSGLGIQQDNEK.

LRR repeat units lie at residues 14-34 (YRKR…PPTI), 35-59 (GALQ…IGKL), 60-82 (SKVE…IGSL), 84-106 (TLKQ…NIGA), 107-130 (LKNL…ISNC), 132-152 (ALEY…EFGK), 153-176 (LYNL…ISGW), 177-200 (VKLE…CLLG), 202-222 (LSTL…LSSM), 224-245 (SLTN…LSNL), 246-270 (RQLK…LLSE), 272-292 (IELD…IATL), 293-315 (INLQ…VGNL), 316-340 (INLQ…IGKL), 341-363 (VNLK…IASM), 365-386 (ALKE…IGEL), 387-408 (SGLT…SFGN), 410-432 (SELQ…LDGL), 433-458 (KSCT…LIGL), and 460-478 (ILDV…IVMK).

It localises to the cytoplasm. Functionally, involved in cytoskeleton remodeling, which is needed for normal chemotactic aggregation and efficient cell sorting during multicellular morphogenesis. The protein is Leucine-rich repeat protein lrrA (lrrA) of Dictyostelium discoideum (Social amoeba).